Here is a 186-residue protein sequence, read N- to C-terminus: ADP-ribosylation factor-like protein 6 (186 aa).

Residue G2 is the site of N-myristoyl glycine attachment. GTP-binding positions include 24 to 31, T50, 69 to 73, G72, 130 to 133, and A164; these read GLDNSGKT, DMSGQ, and NKMD. T50 contacts Mg(2+).

It belongs to the small GTPase superfamily. Arf family. As to quaternary structure, interacts with SEC61B, ARL6IP1, ARL6IP2, ARL6IP3, ARL6IP4 ARL6IP5 and ARL6IP6. Interacts (GTP-bound form) with the BBSome a complex that contains BBS1, BBS2, BBS4, BBS5, BBS7, BBS8/TTC8, BBS9 and BBIP10. Interacts (GTP-free form) with IFT27.

The protein localises to the cell projection. Its subcellular location is the cilium membrane. The protein resides in the cytoplasm. It localises to the cytoskeleton. It is found in the cilium axoneme. The protein localises to the cilium basal body. Involved in membrane protein trafficking at the base of the ciliary organelle. Mediates recruitment onto plasma membrane of the BBSome complex which would constitute a coat complex required for sorting of specific membrane proteins to the primary cilia. Together with the BBSome complex and LTZL1, controls SMO ciliary trafficking and contributes to the sonic hedgehog (SHH) pathway regulation. May regulate cilia assembly and disassembly and subsequent ciliary signaling events such as the Wnt signaling cascade. Isoform 2 may be required for proper retinal function and organization. This chain is ADP-ribosylation factor-like protein 6 (ARL6), found in Pongo abelii (Sumatran orangutan).